The sequence spans 403 residues: Chorismate synthase (403 aa).

Arginine 40 and arginine 46 together coordinate NADP(+). FMN-binding positions include 140-142 and 261-262; these read RSS and QA. The segment covering 277–298 has biased composition (basic and acidic residues); the sequence is RRGSEAHDEMVRTDEGVDRETN. Residues 277 to 307 form a disordered region; the sequence is RRGSEAHDEMVRTDEGVDRETNRAGGLEGGM. FMN-binding positions include glycine 305, 320–324, and arginine 346; that span reads KPIST.

Belongs to the chorismate synthase family. In terms of assembly, homotetramer. Requires FMNH2 as cofactor.

The enzyme catalyses 5-O-(1-carboxyvinyl)-3-phosphoshikimate = chorismate + phosphate. It participates in metabolic intermediate biosynthesis; chorismate biosynthesis; chorismate from D-erythrose 4-phosphate and phosphoenolpyruvate: step 7/7. In terms of biological role, catalyzes the anti-1,4-elimination of the C-3 phosphate and the C-6 proR hydrogen from 5-enolpyruvylshikimate-3-phosphate (EPSP) to yield chorismate, which is the branch point compound that serves as the starting substrate for the three terminal pathways of aromatic amino acid biosynthesis. This reaction introduces a second double bond into the aromatic ring system. The sequence is that of Chorismate synthase from Corynebacterium aurimucosum (strain ATCC 700975 / DSM 44827 / CIP 107346 / CN-1) (Corynebacterium nigricans).